The sequence spans 106 residues: UPF0145 protein Fphi_1781 (106 aa).

It belongs to the UPF0145 family.

This chain is UPF0145 protein Fphi_1781, found in Francisella philomiragia subsp. philomiragia (strain ATCC 25017 / CCUG 19701 / FSC 153 / O#319-036).